The chain runs to 156 residues: Small ribosomal subunit protein uS7 (156 aa).

The protein belongs to the universal ribosomal protein uS7 family. In terms of assembly, part of the 30S ribosomal subunit. Contacts proteins S9 and S11.

In terms of biological role, one of the primary rRNA binding proteins, it binds directly to 16S rRNA where it nucleates assembly of the head domain of the 30S subunit. Is located at the subunit interface close to the decoding center, probably blocks exit of the E-site tRNA. This is Small ribosomal subunit protein uS7 from Prochlorococcus marinus (strain NATL2A).